Consider the following 450-residue polypeptide: Phosphoglucosamine mutase (450 aa).

Ser101 (phosphoserine intermediate) is an active-site residue. Residues Ser101, Asp240, Asp242, and Asp244 each contribute to the Mg(2+) site. A Phosphoserine modification is found at Ser101.

It belongs to the phosphohexose mutase family. Mg(2+) serves as cofactor. In terms of processing, activated by phosphorylation.

The enzyme catalyses alpha-D-glucosamine 1-phosphate = D-glucosamine 6-phosphate. Catalyzes the conversion of glucosamine-6-phosphate to glucosamine-1-phosphate. The polypeptide is Phosphoglucosamine mutase (Streptococcus uberis (strain ATCC BAA-854 / 0140J)).